We begin with the raw amino-acid sequence, 347 residues long: Fc receptor-like A (347 aa).

Residues 1-27 (MKLSCMLIEWALYVCPAVLLATQMSLA) form the signal peptide. Ig-like C2-type domains are found at residues 77–166 (PFHL…ETAS) and 179–257 (PVLK…RQIS). 2 disulfide bridges follow: cysteine 106–cysteine 150 and cysteine 199–cysteine 247. The segment at 272–296 (KPATPETPPPAKAPGPLPLLPTPSD) is disordered. Residues 276–292 (PETPPPAKAPGPLPLLP) show a composition bias toward pro residues.

Monomer or homodimer; disulfide-linked.

The protein resides in the cytoplasm. In terms of biological role, may be implicated in B-cell differentiation and lymphomagenesis. The chain is Fc receptor-like A (Fcrla) from Rattus norvegicus (Rat).